A 913-amino-acid polypeptide reads, in one-letter code: DNA mismatch repair protein MutS (913 aa).

Gly-720–Ser-727 serves as a coordination point for ATP.

It belongs to the DNA mismatch repair MutS family.

This protein is involved in the repair of mismatches in DNA. It is possible that it carries out the mismatch recognition step. This protein has a weak ATPase activity. The sequence is that of DNA mismatch repair protein MutS from Prochlorococcus marinus (strain AS9601).